Here is a 64-residue protein sequence, read N- to C-terminus: Large ribosomal subunit protein bL32 (64 aa).

Residues 1–16 are compositionally biased toward basic residues; it reads MAVQKSRKTRSRRGMR. The interval 1 to 64 is disordered; that stretch reads MAVQKSRKTR…TPKESYEDEE (64 aa).

Belongs to the bacterial ribosomal protein bL32 family.

This Coxiella burnetii (strain CbuK_Q154) (Coxiella burnetii (strain Q154)) protein is Large ribosomal subunit protein bL32.